Here is a 327-residue protein sequence, read N- to C-terminus: Annexin A8-like protein 1 (327 aa).

Annexin repeat units lie at residues 21–92 (FNPD…ALMY), 93–164 (PPYR…CLLQ), 177–249 (ALAL…TVVK), and 253–324 (NLHS…SLVG). Ca(2+) is bound by residues Met-266, Gly-268, Gly-270, and Asp-310.

It belongs to the annexin family.

The chain is Annexin A8-like protein 1 from Homo sapiens (Human).